Here is a 386-residue protein sequence, read N- to C-terminus: MATTKSFLILFFMILATTSSTCAKLEEMVTVLSIDGGGIKGIIPAIILEFLEGQLQEVDNNKDARLADYFDVIGGTSTGGLLTAMITTPNENNRPFAAAKDIVPFYLEHGPHIFNYSGSIIGPMYDGKYLLQVLQEKLGETRVHQALTEVAISSFDIKTNKPVIFTKSNLAKSPELDAKMYDICYSTAAAPIYFPPHYFITHTSNGDIYEFNLVDGGVATVGDPALLSLSVATRLAQEDPAFSSIKSLDYKQMLLLSLGTGTNSEFDKTYTAQEAAKWGPLRWMLAIQQMTNAASSYMTDYYISTVFQARHSQNNYLRVQENALTGTTTEMDDASEANMELLVQVGETLLKKPVSKDSPETYEEALKRFAKLLSDRKKLRANKASY.

The first 23 residues, Met-1–Ala-23, serve as a signal peptide directing secretion. Residues Leu-32–Leu-229 form the PNPLA domain. Residues Gly-36–Gly-41 carry the GXGXXG motif. The short motif at Gly-75 to Gly-79 is the GXSXG element. Catalysis depends on Ser-77, which acts as the Nucleophile. N-linked (GlcNAc...) asparagine glycosylation is present at Asn-115. Asp-215 serves as the catalytic Proton acceptor. Residues Asp-215 to Gly-217 carry the DGA/G motif. Residues Glu-321 to Ala-384 are a coiled coil.

It belongs to the patatin family. Tuber.

It localises to the vacuole. In terms of biological role, probable lipolytic acyl hydrolase (LAH), an activity which is thought to be involved in the response of tubers to pathogens. The sequence is that of Patatin group M-3 from Solanum tuberosum (Potato).